The following is a 31-amino-acid chain: Nemertide alpha-7 (31 aa).

Disulfide bonds link C2/C16, C9/C20, and C15/C26. A 4-hydroxyproline modification is found at P29.

The protein belongs to the nemertide family. Confined to the epidermis and to the mucus layer.

Its subcellular location is the secreted. Functionally, potent toxin, demonstrating strong inhibitory effects on insect sodium channels (Nav) and reduced activity on mammalian sodium channels. Potently inhibits inactivation of insect sodium channels of B.germanica (BgNav1) (EC(50)=9.5 nM). The toxin also delays the inactivation of most mammalian Nav (human Nav1.1/SCN1A; EC(50)=171.5 nM, rat Nav1.2/SCN2A; EC(50)=50.4 nM, rat Nav1.3/SCN3A; EC(50)=170.2 nM, rat Nav1.4/SCN4A; EC(50)=810.6 nM, human Nav1.5/SCN5A; EC(50)=155.6 nM, mouse Nav1.6/SCN8A; EC(50)=147.6 nM, human Nav1.9/SCN9A; EC(50)=129 nM). Inactivation is completely prevented by a concentration of 1 uM, resulting in sustained, non-inactivating currents. In addition, the toxin significantly enhances the recovery from inactivation, and the open state is not required for the toxin to interact with the channel. In vivo, injection into brine shrimp (Artemia salina) stops movement or causes death after 24 hours (EC(50)=6.1 uM). This Lineus ruber (Red bootlace) protein is Nemertide alpha-7.